The sequence spans 340 residues: METSALKQQEQPAATKIRNLPWVEKYRPQTLNDLISHQDILSTIQKFINEDRLPHLLLYGPPGTGKTSTILACAKQLYKDKEFGSMVLELNASDDRGIDIIRGPILSFASTRTIFKKGFKLVILDEADAMTQDAQNALRRVIEKFTENTRFCLICNYLSKIIPALQSRCTRFRFGPLTPELMVPRLEHVVEEEKVDISEDGMKALVTLSSGDMRRALNILQSTNMAFGKVTEETVYTCTGHPLKSDIANILDWMLNQDFTTAYRNITELKTLKGLALHDILTEIHLFVHRVDFPSSVRIHLLTKMADIEYRLSVGTNEKIQLSSLIAAFQVTRDLIVAEA.

Position 1 is an N-acetylmethionine (M1). 60–67 (GPPGTGKT) contacts ATP.

The protein belongs to the activator 1 small subunits family. Subunit of the RFC complex, an heteropentameric complex consisting of a large subunit RFC1 and four small subunits RFC2, RFC3, RFC4 and RFC5; the RFC complex interacts with PCNA. Forms an heterotetrameric complex with RFC2, RFC3 and RFC4; this complex has ATPase activity but is not stimulated by PCNA. The heterotetramer of subunits RFC2, RFC3, RFC4 and RFC5 interacts with RAD17.

Its subcellular location is the nucleus. Functionally, subunit of the replication factor C (RFC) complex which acts during elongation of primed DNA templates by DNA polymerases delta and epsilon, and is necessary for ATP-dependent loading of proliferating cell nuclear antigen (PCNA) onto primed DNA. The polypeptide is Replication factor C subunit 5 (RFC5) (Homo sapiens (Human)).